Here is a 188-residue protein sequence, read N- to C-terminus: Pallidipin (188 aa).

The first 18 residues, M1–A18, serve as a signal peptide directing secretion. Intrachain disulfides connect C21/C137, C55/C184, and C89/C105.

It belongs to the calycin superfamily. Triabin family. As to expression, expressed in salivary glands.

It is found in the secreted. In terms of biological role, has been described as a specific inhibitor of collagen-induced platelet aggregation. However, as it does not affect platelet shape change or adhesion, it is plausible that it exerts its antiplatelet activity by a mechanism similar to that of triplatin, moubatin and dipetalodipin as scavenging eicosanoids involved in inflammation such as thromboxane A2 (TXA2). In Meccus pallidipennis (Triatomine bug), this protein is Pallidipin.